A 183-amino-acid chain; its full sequence is NADH dehydrogenase [ubiquinone] iron-sulfur protein 4, mitochondrial (183 aa).

A mitochondrion-targeting transit peptide spans 1 to 28; it reads MSALRQVMCRSTASLQLYQANRAAAARW. Ser-181 is modified (phosphoserine).

Belongs to the complex I NDUFS4 subunit family.

The protein resides in the mitochondrion inner membrane. Functionally, accessory subunit of the mitochondrial membrane respiratory chain NADH dehydrogenase (Complex I), that is believed not to be involved in catalysis. Complex I functions in the transfer of electrons from NADH to the respiratory chain. The immediate electron acceptor for the enzyme is believed to be ubiquinone. The chain is NADH dehydrogenase [ubiquinone] iron-sulfur protein 4, mitochondrial from Drosophila melanogaster (Fruit fly).